Consider the following 546-residue polypeptide: Mitochondrial distribution and morphology protein 34 (546 aa).

In terms of domain architecture, SMP-LTD spans 1-195 (MAFNFNWSPL…LPAIIHRLSL (195 aa)). Disordered stretches follow at residues 208–230 (EVKA…QDPV), 299–319 (SHGG…SHVA), 344–382 (TMGA…CTDS), 395–416 (SSSA…SPDA), and 517–546 (RRIQ…AYGQ). Residues 349–362 (RHPRTRPSRKHKRR) are compositionally biased toward basic residues. The segment covering 363–374 (VVDLRKPQKLDD) has biased composition (basic and acidic residues).

This sequence belongs to the MDM34 family. Component of the ER-mitochondria encounter structure (ERMES) or MDM complex, composed of MMM1, MDM10, MDM12 and MDM34.

The protein localises to the mitochondrion outer membrane. Component of the ERMES/MDM complex, which serves as a molecular tether to connect the endoplasmic reticulum (ER) and mitochondria. Components of this complex are involved in the control of mitochondrial shape and protein biogenesis, and function in nonvesicular lipid trafficking between the ER and mitochondria. MDM34 is required for the interaction of the ER-resident membrane protein MMM1 and the outer mitochondrial membrane-resident beta-barrel protein MDM10. The chain is Mitochondrial distribution and morphology protein 34 from Arthroderma otae (strain ATCC MYA-4605 / CBS 113480) (Microsporum canis).